Reading from the N-terminus, the 216-residue chain is Ribosomal RNA small subunit methyltransferase G (216 aa).

S-adenosyl-L-methionine contacts are provided by residues glycine 73, leucine 78, 124–125 (AE), and arginine 139.

Belongs to the methyltransferase superfamily. RNA methyltransferase RsmG family.

The protein localises to the cytoplasm. Functionally, specifically methylates the N7 position of guanine in position 518 of 16S rRNA. The sequence is that of Ribosomal RNA small subunit methyltransferase G from Arthrobacter sp. (strain FB24).